Here is a 439-residue protein sequence, read N- to C-terminus: 23S rRNA (uracil(1939)-C(5))-methyltransferase RlmD (439 aa).

Positions 10-68 constitute a TRAM domain; sequence KSTQPQRIEFTVDSLDHHCVGIGRHQGKAIFIEGALPGEQVKARILDDKKQYAHAALQQ. Positions 81, 87, 90, and 169 each coordinate [4Fe-4S] cluster. S-adenosyl-L-methionine contacts are provided by Gln-273, Phe-302, Asn-307, Glu-323, Asp-350, and Asp-371. Cys-397 serves as the catalytic Nucleophile.

It belongs to the class I-like SAM-binding methyltransferase superfamily. RNA M5U methyltransferase family. RlmD subfamily.

The enzyme catalyses uridine(1939) in 23S rRNA + S-adenosyl-L-methionine = 5-methyluridine(1939) in 23S rRNA + S-adenosyl-L-homocysteine + H(+). In terms of biological role, catalyzes the formation of 5-methyl-uridine at position 1939 (m5U1939) in 23S rRNA. This Aeromonas salmonicida (strain A449) protein is 23S rRNA (uracil(1939)-C(5))-methyltransferase RlmD.